Consider the following 798-residue polypeptide: MKFTLDWLKSHLDTDATLEQIEVGLTAIGLEVEGIDDPSKHLGGFVVGHILEAEKHPDADKLKLCKVDSGAGILQVVCGAPNARAGLKVILAQPGTYIPITGDVLKKGKVRGVESQGMMCSWRELKLGEDHDGIAELDVTLAVGASLLDIMSFDPMIEISVTPNRVDCLGVRGIARDLAAFGLGNLKPLKVEPVPGAFKSSIGVRLEFAPEDSNACPLFAGRLIRGVKNGDSPQWLKDRLTAIGLRPISALVDITNFFAYDLCRPLHVFDAAKVKGDIRARLARDGETLAGLNGKTYTLESGMTVIADENGPEALAGILGGEHSGCTEATTEVFLEAAYFDPIRTAATGRKLDILSDARFRFERGVDPAFVVPSMELATRMILDLCGGEASEAVIAGTEPDWQKSIVLRPNRVAELGGVEVSTQRMETILNDLGCAVAEHADGLLVNPPSWRGDITAEHDLVEEVIRINGYDNIPATPMPRPAMPKPVLTPGQRRSGWVRRQLATRGLVETVTWSFLPEAQAVMFGGGAPEMHLANPISSDLDVMRPSVLPNLVTAAGRNADRGMKDLGLFELGPQFDGPEPGQQRLVAAGIRAGRARGRHWADPARAVDAFDAKADILSAVAAAGANPDSLQVVAEAPVWYHPGRSGTLKLGNKPVGFFGEIHPGLLAKLDVKGPVAGFELFLEALPAQKAKATKAKPLLKASALQPLDRDFAFTLDTGVAADAVVRAARNADKVLISDVAVFDLYEGDKMAAGKKSLAITVTLQPTDKTLTDEDIEAVGAKIVAAVAKATGGELRG.

Positions 39–148 (SKHLGGFVVG…VTLAVGASLL (110 aa)) constitute a tRNA-binding domain. Residues 401–476 (DWQKSIVLRP…RINGYDNIPA (76 aa)) form the B5 domain. Mg(2+) contacts are provided by D454, D460, E463, and E464. The region spanning 704–797 (SALQPLDRDF…VAKATGGELR (94 aa)) is the FDX-ACB domain.

This sequence belongs to the phenylalanyl-tRNA synthetase beta subunit family. Type 1 subfamily. In terms of assembly, tetramer of two alpha and two beta subunits. It depends on Mg(2+) as a cofactor.

It is found in the cytoplasm. It catalyses the reaction tRNA(Phe) + L-phenylalanine + ATP = L-phenylalanyl-tRNA(Phe) + AMP + diphosphate + H(+). This is Phenylalanine--tRNA ligase beta subunit from Paramagnetospirillum magneticum (strain ATCC 700264 / AMB-1) (Magnetospirillum magneticum).